The following is a 259-amino-acid chain: Snake venom serine proteinase 2 (259 aa).

The N-terminal stretch at 1–18 (MVLIRVLANLLILQLSYA) is a signal peptide. A propeptide spanning residues 19–24 (QKSSEL) is cleaved from the precursor. Residues 25-250 (IFGGRPCNRN…HLDWIQSIIA (226 aa)) form the Peptidase S1 domain. Intrachain disulfides connect C31–C162, C49–C65, C97–C257, C141–C211, C173–C190, and C201–C226. Catalysis depends on charge relay system residues H64 and D109. The active-site Charge relay system is S205.

This sequence belongs to the peptidase S1 family. Snake venom subfamily. Monomer. Expressed by the venom gland.

The protein localises to the secreted. Functionally, snake venom serine protease that may act in the hemostasis system of the prey. The polypeptide is Snake venom serine proteinase 2 (Crotalus adamanteus (Eastern diamondback rattlesnake)).